The primary structure comprises 84 residues: UPF0473 protein CLI_2624 (84 aa).

The protein belongs to the UPF0473 family.

The sequence is that of UPF0473 protein CLI_2624 from Clostridium botulinum (strain Langeland / NCTC 10281 / Type F).